The chain runs to 253 residues: Sec-independent protein translocase protein TatC (253 aa).

6 helical membrane-spanning segments follow: residues 18 to 38 (VSVG…KSIF), 69 to 89 (AIVI…APGL), 96 to 116 (VILP…AFSY), 151 to 171 (LILG…LAKV), 187 to 207 (IVVI…SQIF), and 208 to 228 (MALP…MVNP). The tract at residues 231 to 253 (KDNENNNENNNENNTKENTKSES) is disordered. Basic and acidic residues predominate over residues 244 to 253 (NTKENTKSES).

The protein belongs to the TatC family. As to quaternary structure, the Tat system comprises two distinct complexes: a TatABC complex, containing multiple copies of TatA, TatB and TatC subunits, and a separate TatA complex, containing only TatA subunits. Substrates initially bind to the TatABC complex, which probably triggers association of the separate TatA complex to form the active translocon.

The protein resides in the cell inner membrane. In terms of biological role, part of the twin-arginine translocation (Tat) system that transports large folded proteins containing a characteristic twin-arginine motif in their signal peptide across membranes. Together with TatB, TatC is part of a receptor directly interacting with Tat signal peptides. The sequence is that of Sec-independent protein translocase protein TatC from Helicobacter pylori (strain ATCC 700392 / 26695) (Campylobacter pylori).